Consider the following 335-residue polypeptide: Phosphate acyltransferase (335 aa).

It belongs to the PlsX family. In terms of assembly, homodimer. Probably interacts with PlsY.

It is found in the cytoplasm. The catalysed reaction is a fatty acyl-[ACP] + phosphate = an acyl phosphate + holo-[ACP]. The protein operates within lipid metabolism; phospholipid metabolism. Catalyzes the reversible formation of acyl-phosphate (acyl-PO(4)) from acyl-[acyl-carrier-protein] (acyl-ACP). This enzyme utilizes acyl-ACP as fatty acyl donor, but not acyl-CoA. The sequence is that of Phosphate acyltransferase from Brevibacillus brevis (strain 47 / JCM 6285 / NBRC 100599).